The following is a 552-amino-acid chain: Probable acyl-activating enzyme 5, peroxisomal (552 aa).

The short motif at Ser-550–Met-552 is the Microbody targeting signal element.

The protein belongs to the ATP-dependent AMP-binding enzyme family. Expressed in roots, stems and developing seeds.

Its subcellular location is the peroxisome. In terms of biological role, may act as an acid--thiol ligase that activates carboxylic acids by forming acyl-CoAs. This chain is Probable acyl-activating enzyme 5, peroxisomal (AAE5), found in Arabidopsis thaliana (Mouse-ear cress).